The sequence spans 550 residues: Phospholipase B-like 1 (550 aa).

The first 39 residues, 1–39 (MCHRSHGRSLRPPSPLLLLLPLLLQSPWAAGAAEKHNSA), serve as a signal peptide directing secretion. Asn72 carries an N-linked (GlcNAc...) (high mannose) asparagine; alternate glycan. Asn72 carries an N-linked (GlcNAc...) (hybrid) asparagine; alternate glycan. Positions 210-228 (LSPTKSSSLKKFKIWEMGH) are cleaved as a propeptide — removed in mature form. N-linked (GlcNAc...) (high mannose) asparagine; alternate glycans are attached at residues Asn309 and Asn412. N-linked (GlcNAc...) (hybrid) asparagine; alternate glycans are attached at residues Asn309 and Asn412. 2 disulfides stabilise this stretch: Cys471/Cys476 and Cys475/Cys490. Asn527 carries an N-linked (GlcNAc...) (high mannose) asparagine; alternate glycan. The N-linked (GlcNAc...) (hybrid) asparagine; alternate glycan is linked to Asn527.

Belongs to the phospholipase B-like family. As to quaternary structure, may form a homodimer, each monomer is composed of a chain A and a chain B. The maturation cleavages that produces chains A and B are required to open the putative substrate binding pocket. Both chains A and B remain associated in the mature protein.

It localises to the lysosome. Functionally, exhibits weak phospholipase activity, acting on various phospholipids, including phosphatidylcholine, phosphatidylinositol, phosphatidylethanolamine and lysophospholipids. However, in view of the small size of the putative binding pocket, it has been proposed that it may act rather as an amidase or a peptidase. This chain is Phospholipase B-like 1 (Plbd1), found in Rattus norvegicus (Rat).